The chain runs to 514 residues: Thymus-specific serine protease (514 aa).

A signal peptide spans 1 to 24 (MAVWLAQWLGPLLLVSLWGLLAPA). Residues N70 and N172 are each glycosylated (N-linked (GlcNAc...) asparagine). Residue S185 is the Charge relay system of the active site. A glycan (N-linked (GlcNAc...) asparagine) is linked at N321. Active-site charge relay system residues include D447 and H472.

The protein belongs to the peptidase S28 family. As to expression, expressed predominantly in cortical thymic epithelial cells.

It is found in the cytoplasmic vesicle. In terms of biological role, protease that may play a role in T-cell development. This Homo sapiens (Human) protein is Thymus-specific serine protease (PRSS16).